Here is a 414-residue protein sequence, read N- to C-terminus: Serine hydroxymethyltransferase (414 aa).

(6S)-5,6,7,8-tetrahydrofolate is bound by residues leucine 121 and 125–127 (GHL). Lysine 230 carries the post-translational modification N6-(pyridoxal phosphate)lysine.

It belongs to the SHMT family. Homodimer. It depends on pyridoxal 5'-phosphate as a cofactor.

It is found in the cytoplasm. It catalyses the reaction (6R)-5,10-methylene-5,6,7,8-tetrahydrofolate + glycine + H2O = (6S)-5,6,7,8-tetrahydrofolate + L-serine. It functions in the pathway one-carbon metabolism; tetrahydrofolate interconversion. It participates in amino-acid biosynthesis; glycine biosynthesis; glycine from L-serine: step 1/1. Functionally, catalyzes the reversible interconversion of serine and glycine with tetrahydrofolate (THF) serving as the one-carbon carrier. This reaction serves as the major source of one-carbon groups required for the biosynthesis of purines, thymidylate, methionine, and other important biomolecules. Also exhibits THF-independent aldolase activity toward beta-hydroxyamino acids, producing glycine and aldehydes, via a retro-aldol mechanism. The polypeptide is Serine hydroxymethyltransferase (Acidithiobacillus ferrooxidans (strain ATCC 23270 / DSM 14882 / CIP 104768 / NCIMB 8455) (Ferrobacillus ferrooxidans (strain ATCC 23270))).